Consider the following 163-residue polypeptide: Ureidoglycolate lyase (163 aa).

Belongs to the ureidoglycolate lyase family. In terms of assembly, homodimer. Ni(2+) serves as cofactor.

It catalyses the reaction (S)-ureidoglycolate = urea + glyoxylate. It participates in nitrogen metabolism; (S)-allantoin degradation. In terms of biological role, catalyzes the catabolism of the allantoin degradation intermediate (S)-ureidoglycolate, generating urea and glyoxylate. Involved in the utilization of allantoin as nitrogen source. The protein is Ureidoglycolate lyase of Mesorhizobium japonicum (strain LMG 29417 / CECT 9101 / MAFF 303099) (Mesorhizobium loti (strain MAFF 303099)).